Consider the following 377-residue polypeptide: Geranylgeranyl transferase type-1 subunit beta (377 aa).

4 PFTB repeats span residues 144-186, 193-234, 245-284, and 291-333; these read KEAC…YMLN, MKKA…CLMG, LNRI…KLLK, and FEKN…SLME. Residues 219-221 and 263-266 contribute to the geranylgeranyl diphosphate site; these read HGG and RPNK. Asp-269 and Cys-271 together coordinate Zn(2+). 272-275 serves as a coordination point for geranylgeranyl diphosphate; it reads YSFW. His-321 contributes to the Zn(2+) binding site.

The protein belongs to the protein prenyltransferase subunit beta family. As to quaternary structure, heterodimer of FNTA and PGGT1B. PGGT1B mediates interaction with substrate peptides. Zn(2+) serves as cofactor. It depends on Mg(2+) as a cofactor.

It carries out the reaction geranylgeranyl diphosphate + L-cysteinyl-[protein] = S-geranylgeranyl-L-cysteinyl-[protein] + diphosphate. Catalyzes the transfer of a geranyl-geranyl moiety from geranyl-geranyl pyrophosphate to a cysteine at the fourth position from the C-terminus of proteins having the C-terminal sequence Cys-aliphatic-aliphatic-X. Known substrates include RAC1, RAC2, RAP1A and RAP1B. This chain is Geranylgeranyl transferase type-1 subunit beta (PGGT1B), found in Bos taurus (Bovine).